The following is a 661-amino-acid chain: Ubiquitin carboxyl-terminal hydrolase 25 (661 aa).

One can recognise a USP domain in the interval 24 to 335; it reads LGLRNLGNTC…KAYILFFSRS (312 aa). C33 acts as the Nucleophile in catalysis. H294 acts as the Proton acceptor in catalysis. Disordered stretches follow at residues 387–406 and 449–558; these read GNLASSKPHKFIRPKPRAEQ and FHQD…LCSS. A compositionally biased stretch (basic and acidic residues) spans 449–461; the sequence is FHQDENIAPKANK. 2 stretches are compositionally biased toward polar residues: residues 462-475 and 545-558; these read ENSVSVLPTKVNSG and NGVSTTQSKGLCSS.

This sequence belongs to the peptidase C19 family.

The enzyme catalyses Thiol-dependent hydrolysis of ester, thioester, amide, peptide and isopeptide bonds formed by the C-terminal Gly of ubiquitin (a 76-residue protein attached to proteins as an intracellular targeting signal).. Recognizes and hydrolyzes the peptide bond at the C-terminal Gly of ubiquitin. Involved in the processing of poly-ubiquitin precursors as well as that of ubiquitinated proteins. This chain is Ubiquitin carboxyl-terminal hydrolase 25 (UBP25), found in Arabidopsis thaliana (Mouse-ear cress).